Reading from the N-terminus, the 76-residue chain is Virulence-associated protein VagC (76 aa).

A SpoVT-AbrB domain is found at 4-45 (VSIFKNGNNRAIRLPRDLDFEGVSELEIVREGDSIILRPVRP).

Belongs to the VapB family.

This is Virulence-associated protein VagC (vagC) from Salmonella dublin.